A 217-amino-acid chain; its full sequence is Fucoxanthin-chlorophyll a-c binding protein B, chloroplastic (217 aa).

Residues 1 to 39 constitute a chloroplast transit peptide; sequence MKSAVMAVACAAAPGFRGPSAFNGAALTTSAKACSAMKM. 3 helical membrane-spanning segments follow: residues 81–101, 122–142, and 183–203; these read IAML…PGML, IPPA…LAVM, and GRAA…NNKP.

This sequence belongs to the fucoxanthin chlorophyll protein family. The LHC complex of chromophytic algae is composed of fucoxanthin, chlorophyll A and C bound non-covalently by fucoxanthin chlorophyll proteins (FCPs). The ratio of pigments in this LHC is; fucoxanthin: chlorophyll C: chlorophyll A; (0.6-1): (0.1-0.3): (1).

The protein localises to the plastid. It is found in the chloroplast thylakoid membrane. Its function is as follows. The light-harvesting complex (LHC) functions as a light receptor, it captures and delivers excitation energy to photosystems with which it is closely associated. Energy is transferred from the carotenoid and chlorophyll C (or B) to chlorophyll A and the photosynthetic reaction centers where it is used to synthesize ATP and reducing power. This is Fucoxanthin-chlorophyll a-c binding protein B, chloroplastic (FCPB) from Macrocystis pyrifera (Giant kelp).